Reading from the N-terminus, the 156-residue chain is Protein CURVATURE THYLAKOID 1C, chloroplastic (156 aa).

The N-terminal 55 residues, 1-55 (MASISATLPSPLLLTQRKSNLTSIQKLPFSLTRGTNDLSPLSLTRNPSSISLMVK), are a transit peptide targeting the chloroplast. Residues 56–83 (ASGESSDSSTDLDVVSTIQNVWDKSEDR) lie on the Stromal side of the membrane. Residues 84 to 104 (LGLIGLGFAGIVALWASLNLI) traverse the membrane as a helical segment. Residues 105 to 109 (TAIDK) are Lumenal-facing. The helical transmembrane segment at 110–130 (LPVISSGFELVGILFSTWFTY) threads the bilayer. Topologically, residues 131–156 (RYLLFKPDRQELSKIVKKSVADILGQ) are stromal.

The protein belongs to the CURT family. As to quaternary structure, homo- and heterodimers and trimers. Interacts with PSAD2.

The protein localises to the plastid. It localises to the chloroplast thylakoid membrane. Functionally, determines thylakoid architecture by inducing membrane curvature. This is Protein CURVATURE THYLAKOID 1C, chloroplastic (CURT1C) from Arabidopsis thaliana (Mouse-ear cress).